Reading from the N-terminus, the 278-residue chain is Bifunctional protein FolD (278 aa).

Residues 164 to 166 (GRS) and Thr-228 contribute to the NADP(+) site.

Belongs to the tetrahydrofolate dehydrogenase/cyclohydrolase family. In terms of assembly, homodimer.

It catalyses the reaction (6R)-5,10-methylene-5,6,7,8-tetrahydrofolate + NADP(+) = (6R)-5,10-methenyltetrahydrofolate + NADPH. It carries out the reaction (6R)-5,10-methenyltetrahydrofolate + H2O = (6R)-10-formyltetrahydrofolate + H(+). Its pathway is one-carbon metabolism; tetrahydrofolate interconversion. In terms of biological role, catalyzes the oxidation of 5,10-methylenetetrahydrofolate to 5,10-methenyltetrahydrofolate and then the hydrolysis of 5,10-methenyltetrahydrofolate to 10-formyltetrahydrofolate. This Mycoplasmopsis synoviae (strain 53) (Mycoplasma synoviae) protein is Bifunctional protein FolD.